We begin with the raw amino-acid sequence, 232 residues long: Uracil phosphoribosyltransferase (232 aa).

38–42 (KGLVK) is a binding site for GTP. 5-phospho-alpha-D-ribose 1-diphosphate is bound by residues Arg87, Arg112, and 140–148 (DPMIATGST). Uracil is bound by residues Ile204 and 209–211 (GDA). Asp210 is a binding site for 5-phospho-alpha-D-ribose 1-diphosphate.

The protein belongs to the UPRTase family. Mg(2+) serves as cofactor.

It catalyses the reaction UMP + diphosphate = 5-phospho-alpha-D-ribose 1-diphosphate + uracil. The protein operates within pyrimidine metabolism; UMP biosynthesis via salvage pathway; UMP from uracil: step 1/1. Its activity is regulated as follows. Allosterically activated by GTP. Functionally, catalyzes the conversion of uracil and 5-phospho-alpha-D-ribose 1-diphosphate (PRPP) to UMP and diphosphate. The protein is Uracil phosphoribosyltransferase of Thermococcus sibiricus (strain DSM 12597 / MM 739).